Consider the following 516-residue polypeptide: Flagellar radial spoke protein 3 (516 aa).

Polar residues-rich tracts occupy residues 1-11 and 62-74; these read MVQAKAQQQLY and ATQTQTKGPSPAS. 4 disordered regions span residues 1 to 32, 60 to 90, 388 to 412, and 424 to 447; these read MVQAKAQQQLYTHAAEPKAVQQRRAKYREDET, ADATQTQTKGPSPASTKKRTTRTLPPRTPEA, NAKWEADKAEAAEKARAEAEAAAEE, and AAAEAEERGEEPPAEPPSLPDGVE. Positions 391–412 are enriched in basic and acidic residues; sequence WEADKAEAAEKARAEAEAAAEE.

The protein belongs to the flagellar radial spoke RSP3 family. As to quaternary structure, interacts with FAP91. Post-translationally, protein 3 is one of the 5 radial spoke proteins that are phosphorylated. In terms of processing, protein 3a might only differ from protein 3 in being unphosphorylated.

The protein localises to the cytoplasm. Its subcellular location is the cytoskeleton. It localises to the flagellum axoneme. Its function is as follows. Protein 3 may attach the radial spoke to the outer doublet microtubule or is required to form a stable spoke structure. Flagellar radial spokes contribute to the regulation of dynein arm activity and thus the pattern of flagellar bending. They consist of a thin stalk, which is attached to the a subfiber of the outer doublet microtubule, and a bulbous head, which is attached to the stalk and appears to interact with the projections from the central pair of microtubules. The polypeptide is Flagellar radial spoke protein 3 (Chlamydomonas reinhardtii (Chlamydomonas smithii)).